The following is a 245-amino-acid chain: Pyridoxine 5'-phosphate synthase (245 aa).

Residues Asn8 and Arg19 each contribute to the 3-amino-2-oxopropyl phosphate site. The active-site Proton acceptor is the His44. Positions 46 and 51 each coordinate 1-deoxy-D-xylulose 5-phosphate. The active-site Proton acceptor is Glu76. Position 106 (Thr106) interacts with 1-deoxy-D-xylulose 5-phosphate. The active-site Proton donor is His198. Residues Asp199 and 221–222 (GH) each bind 3-amino-2-oxopropyl phosphate.

Belongs to the PNP synthase family. In terms of assembly, homooctamer; tetramer of dimers.

It is found in the cytoplasm. It carries out the reaction 3-amino-2-oxopropyl phosphate + 1-deoxy-D-xylulose 5-phosphate = pyridoxine 5'-phosphate + phosphate + 2 H2O + H(+). It participates in cofactor biosynthesis; pyridoxine 5'-phosphate biosynthesis; pyridoxine 5'-phosphate from D-erythrose 4-phosphate: step 5/5. Catalyzes the complicated ring closure reaction between the two acyclic compounds 1-deoxy-D-xylulose-5-phosphate (DXP) and 3-amino-2-oxopropyl phosphate (1-amino-acetone-3-phosphate or AAP) to form pyridoxine 5'-phosphate (PNP) and inorganic phosphate. The polypeptide is Pyridoxine 5'-phosphate synthase (Brucella anthropi (strain ATCC 49188 / DSM 6882 / CCUG 24695 / JCM 21032 / LMG 3331 / NBRC 15819 / NCTC 12168 / Alc 37) (Ochrobactrum anthropi)).